A 550-amino-acid polypeptide reads, in one-letter code: Transcription factor 7-like 1-C (550 aa).

Positions 1 to 11 (MPQLNSGGGDE) are enriched in gly residues. Residues 1 to 60 (MPQLNSGGGDELGANDELIRFKDEGEQEEKSPGEGSAEDLADVKSSLVNESENHSSDSDS) form an interaction with CTNNB1-A region. Disordered stretches follow at residues 1 to 76 (MPQL…EKPR), 182 to 206 (GTPP…HPSE), and 390 to 473 (WSAR…SLTT). Composition is skewed to basic and acidic residues over residues 17 to 32 (ELIR…EKSP) and 51 to 76 (SENH…EKPR). Positions 108–311 (LGGITCPMVP…SPNLSRKSNV (204 aa)) are interaction with AES and TLE4-A. Positions 323 to 391 (IKKPLNAFML…LHSQLYPSWS (69 aa)) form a DNA-binding region, HMG box. Over residues 406–415 (KQSPEMENYT) the composition is skewed to basic and acidic residues. The interaction with CTBP-B stretch occupies residues 407–550 (QSPEMENYTK…PLSLVTRSSD (144 aa)). Residues 444 to 463 (SPATPSAALASPAAPAATHS) are compositionally biased toward low complexity. Residues 464–473 (EQAQPLSLTT) are compositionally biased toward polar residues.

The protein belongs to the TCF/LEF family. Interacts with csnk1e, ctnnb1-A, ctbp-B, dact1-A and gsk3b. May interact with ase and tle4-A. Post-translationally, phosphorylated. Phosphorylation by csnk1e promotes binding to ctnnb1-A while phosphorylation by gsk3b may reverse this effect.

Its subcellular location is the nucleus. Its function is as follows. Participates in the Wnt signaling pathway. Binds to DNA and acts as a repressor in the absence of ctnnb1-A and possibly ctnnb1-B, and as an activator in the presence of these proteins. Required early in development for the establishment of the dorsal body axis in response to maternal Wnt signaling. In Xenopus laevis (African clawed frog), this protein is Transcription factor 7-like 1-C (tcf7l1-c).